Here is a 95-residue protein sequence, read N- to C-terminus: Putative septation protein SpoVG (95 aa).

Belongs to the SpoVG family.

Could be involved in septation. The protein is Putative septation protein SpoVG of Clostridium acetobutylicum (strain ATCC 824 / DSM 792 / JCM 1419 / IAM 19013 / LMG 5710 / NBRC 13948 / NRRL B-527 / VKM B-1787 / 2291 / W).